Consider the following 430-residue polypeptide: Potassium channel subfamily K member 12 (430 aa).

Over 1–38 the chain is Cytoplasmic; that stretch reads MSSRSPRPPPRRCRRRLPRPSCCCCCCRRSHLNEDTGR. Positions 11–16 are ER retention/retrieval signal; the sequence is RRCRRR. The helical transmembrane segment at 39-59 threads the bilayer; the sequence is FVLLAALIGLYLVAGATVFSA. N78 carries an N-linked (GlcNAc...) asparagine glycan. Positions 114 to 134 form an intramembrane region, pore-forming; the sequence is WDFPGAFYFVGTVVSTIGFGM. Positions 129, 130, and 131 each coordinate K(+). The selectivity filter 1 stretch occupies residues 129-134; sequence TIGFGM. The chain crosses the membrane as a helical span at residues 145-165; the sequence is FLIAYGLFGCAGTILFFNLFL. Residues 166–212 are Cytoplasmic-facing; the sequence is ERIISLLAFIMRACRERQLRRSGLLPATFRRGSALSEADSLAGWKPS. Residues 213–233 traverse the membrane as a helical segment; sequence VYHVLLILGLFAVLLACCASA. An intramembrane region (pore-forming) is located at residues 243-263; that stretch reads YVDSLYFCFVTFSTIGFGDLV. Positions 256, 257, 258, and 259 each coordinate K(+). Residues 256–261 are selectivity filter 2; it reads TIGFGD. A helical transmembrane segment spans residues 282-302; that stretch reads LFILLGVCCIYSLFNVISILI. The Cytoplasmic segment spans residues 303-430; that stretch reads KQVLNWMLRK…NRLAETSASR (128 aa).

This sequence belongs to the two pore domain potassium channel (TC 1.A.1.8) family. As to quaternary structure, homodimer. Heterodimer with KCNK13. As to expression, highly expressed in most brain regions. Also expressed in other tissues such as lung, kidney, liver, stomach and spleen.

The protein resides in the cell membrane. It is found in the endoplasmic reticulum membrane. The enzyme catalyses K(+)(in) = K(+)(out). In terms of biological role, k(+) channel subunit that may homo- and heterodimerize to form functional channels with distinct regulatory and gating properties. Can heterodimerize with KCNK13 subunit to conduct K(+) outward rectifying currents at the plasma membrane. The homodimers are mainly retained in the endoplasmic reticulum compartment and may be targeted to the cell surface upon phosphorylation or other activation signals yet to be elucidated. The chain is Potassium channel subfamily K member 12 (Kcnk12) from Rattus norvegicus (Rat).